Here is a 290-residue protein sequence, read N- to C-terminus: Phosphate import ATP-binding protein PstB (290 aa).

Residues Leu25 to Leu285 enclose the ABC transporter domain. Gly57–Ser64 provides a ligand contact to ATP.

This sequence belongs to the ABC transporter superfamily. Phosphate importer (TC 3.A.1.7) family. The complex is composed of two ATP-binding proteins (PstB), two transmembrane proteins (PstC and PstA) and a solute-binding protein (PstS).

The protein resides in the cell inner membrane. The catalysed reaction is phosphate(out) + ATP + H2O = ADP + 2 phosphate(in) + H(+). Its function is as follows. Part of the ABC transporter complex PstSACB involved in phosphate import. Responsible for energy coupling to the transport system. The polypeptide is Phosphate import ATP-binding protein PstB (Zymomonas mobilis subsp. mobilis (strain ATCC 31821 / ZM4 / CP4)).